The chain runs to 296 residues: Glycine N-acyltransferase-like protein (296 aa).

The residue at position 41 (Lys41) is an N6-acetyllysine; alternate. The residue at position 41 (Lys41) is an N6-succinyllysine; alternate. Lys43 carries the post-translational modification N6-acetyllysine. The residue at position 48 (Lys48) is an N6-acetyllysine; alternate. Lys48 carries the N6-succinyllysine; alternate modification. 2 positions are modified to N6-acetyllysine: Lys80 and Lys83. N6-acetyllysine; alternate occurs at positions 183 and 256. Residues Lys183 and Lys256 each carry the N6-succinyllysine; alternate modification.

It belongs to the glycine N-acyltransferase family.

It localises to the mitochondrion. It carries out the reaction an acyl-CoA + glycine = an N-acylglycine + CoA + H(+). In terms of biological role, mitochondrial acyltransferase which transfers the acyl group to the N-terminus of glycine. Can conjugate a multitude of substrates to form a variety of N-acylglycines. The protein is Glycine N-acyltransferase-like protein (Gm4952) of Mus musculus (Mouse).